The chain runs to 149 residues: Large ribosomal subunit protein bL9 (149 aa).

The protein belongs to the bacterial ribosomal protein bL9 family. Part of the 50S ribosomal subunit. In stalled/collided disomes (pairs of ribosomes where the leading ribosome is stalled and a second ribosome has collided with it), bL9 in the collided ribosome contacts bS6 and uL2, while it contacts only helices of the 16S rRNA in the stalled ribosome; the inter-ribosome bridge thus formed is different from that formed between normally translating ribosomes.

Binds to the 23S rRNA. The polypeptide is Large ribosomal subunit protein bL9 (Bacillus subtilis (strain 168)).